We begin with the raw amino-acid sequence, 101 residues long: MIFEHALVLSAYLFSIGIYGLITSRNMVRALMCLELILNAVNINLVTFSDFFDSRQLKGNIFSIFVIAIAAAEAAIGPAIVSSIYRNRKSTRINQSNLLNK.

3 helical membrane-spanning segments follow: residues 2-22 (IFEH…YGLI), 32-52 (MCLE…SDFF), and 61-81 (IFSI…PAIV).

The protein belongs to the complex I subunit 4L family. As to quaternary structure, NDH is composed of at least 16 different subunits, 5 of which are encoded in the nucleus.

It localises to the plastid. The protein localises to the chloroplast thylakoid membrane. The catalysed reaction is a plastoquinone + NADH + (n+1) H(+)(in) = a plastoquinol + NAD(+) + n H(+)(out). The enzyme catalyses a plastoquinone + NADPH + (n+1) H(+)(in) = a plastoquinol + NADP(+) + n H(+)(out). NDH shuttles electrons from NAD(P)H:plastoquinone, via FMN and iron-sulfur (Fe-S) centers, to quinones in the photosynthetic chain and possibly in a chloroplast respiratory chain. The immediate electron acceptor for the enzyme in this species is believed to be plastoquinone. Couples the redox reaction to proton translocation, and thus conserves the redox energy in a proton gradient. This chain is NAD(P)H-quinone oxidoreductase subunit 4L, chloroplastic, found in Glycine max (Soybean).